A 637-amino-acid polypeptide reads, in one-letter code: Chaperone protein HtpG (637 aa).

Positions 1 to 345 (MTAAQKETLG…SNDLPLNVSR (345 aa)) are a; substrate-binding. Positions 346–562 (EILQDNKVTQ…DNDMSSQMQK (217 aa)) are b. The segment at 563–637 (LMESVGQAAP…LNKLMLELSK (75 aa)) is c.

The protein belongs to the heat shock protein 90 family. In terms of assembly, homodimer.

The protein localises to the cytoplasm. Functionally, molecular chaperone. Has ATPase activity. The polypeptide is Chaperone protein HtpG (Pseudoalteromonas translucida (strain TAC 125)).